A 508-amino-acid polypeptide reads, in one-letter code: Ribonuclease Y (508 aa).

Residues 2–22 (IITALIAIAVGFLIGYLARKI) traverse the membrane as a helical segment. The 64-residue stretch at 198 to 261 (TVSVVTLPND…EVARIALEKL (64 aa)) folds into the KH domain. Positions 324–417 (VLKHSIEVAH…VQAADAISAA (94 aa)) constitute an HD domain.

This sequence belongs to the RNase Y family.

Its subcellular location is the cell membrane. In terms of biological role, endoribonuclease that initiates mRNA decay. The chain is Ribonuclease Y from Thermoanaerobacter pseudethanolicus (strain ATCC 33223 / 39E) (Clostridium thermohydrosulfuricum).